A 351-amino-acid chain; its full sequence is Homoserine O-acetyltransferase (351 aa).

Residues 51–334 (VIWVLHALTG…IYGHDAFLIE (284 aa)) form the AB hydrolase-1 domain. Ser146 serves as the catalytic Nucleophile. Arg212 serves as a coordination point for substrate. Active-site residues include Asp299 and His328. Asp329 provides a ligand contact to substrate.

The protein belongs to the AB hydrolase superfamily. MetX family. In terms of assembly, homodimer.

The protein resides in the cytoplasm. The enzyme catalyses L-homoserine + acetyl-CoA = O-acetyl-L-homoserine + CoA. The protein operates within amino-acid biosynthesis; L-methionine biosynthesis via de novo pathway; O-acetyl-L-homoserine from L-homoserine: step 1/1. In terms of biological role, transfers an acetyl group from acetyl-CoA to L-homoserine, forming acetyl-L-homoserine. The chain is Homoserine O-acetyltransferase from Cyclobacterium marinum (strain ATCC 25205 / DSM 745 / LMG 13164 / NCIMB 1802) (Flectobacillus marinus).